Consider the following 400-residue polypeptide: Cytochrome b (400 aa).

Residues 47-67 (LGSIAGIALVIQIITGVILAM) form a helical membrane-spanning segment. Positions 97 and 111 each coordinate heme b. 8 helical membrane passes run 98 to 118 (AVGASMFFAAVYLHIARGLYY), 131 to 151 (IGIIIFLTMMATAFMGYVLPW), 166 to 186 (FSAIPLIGKSIVTWLWGGFSV), 194 to 214 (FFSLHYLLPFIIVALVMLHLV), 247 to 267 (FVGFGVYFIIFAYFIFYEPNY), 306 to 326 (LGGVLLMFGSIFVLFLLPWLD), 341 to 361 (IAFWIFMADCLLLGYLGGQPA), and 368 to 388 (ISRFAACYYFFHFLVALPLIG). Histidine 198 and histidine 212 together coordinate heme b.

Belongs to the cytochrome b family. The main subunits of complex b-c1 are: cytochrome b, cytochrome c1 and the Rieske protein. It depends on heme b as a cofactor.

It is found in the cell membrane. Functionally, component of the ubiquinol-cytochrome c reductase complex (complex III or cytochrome b-c1 complex), which is a respiratory chain that generates an electrochemical potential coupled to ATP synthesis. This Rickettsia bellii (strain RML369-C) protein is Cytochrome b (petB).